The following is a 552-amino-acid chain: Dihydroxy-acid dehydratase (552 aa).

A Mg(2+)-binding site is contributed by Asp-78. Residue Cys-119 participates in [2Fe-2S] cluster binding. Asp-120 and Lys-121 together coordinate Mg(2+). Lys-121 carries the post-translational modification N6-carboxylysine. Residue Cys-191 participates in [2Fe-2S] cluster binding. Glu-442 contacts Mg(2+). Ser-468 (proton acceptor) is an active-site residue.

Belongs to the IlvD/Edd family. As to quaternary structure, homodimer. It depends on [2Fe-2S] cluster as a cofactor. Mg(2+) serves as cofactor.

The enzyme catalyses (2R)-2,3-dihydroxy-3-methylbutanoate = 3-methyl-2-oxobutanoate + H2O. It catalyses the reaction (2R,3R)-2,3-dihydroxy-3-methylpentanoate = (S)-3-methyl-2-oxopentanoate + H2O. It functions in the pathway amino-acid biosynthesis; L-isoleucine biosynthesis; L-isoleucine from 2-oxobutanoate: step 3/4. It participates in amino-acid biosynthesis; L-valine biosynthesis; L-valine from pyruvate: step 3/4. Its function is as follows. Functions in the biosynthesis of branched-chain amino acids. Catalyzes the dehydration of (2R,3R)-2,3-dihydroxy-3-methylpentanoate (2,3-dihydroxy-3-methylvalerate) into 2-oxo-3-methylpentanoate (2-oxo-3-methylvalerate) and of (2R)-2,3-dihydroxy-3-methylbutanoate (2,3-dihydroxyisovalerate) into 2-oxo-3-methylbutanoate (2-oxoisovalerate), the penultimate precursor to L-isoleucine and L-valine, respectively. This is Dihydroxy-acid dehydratase from Ruminiclostridium cellulolyticum (strain ATCC 35319 / DSM 5812 / JCM 6584 / H10) (Clostridium cellulolyticum).